A 71-amino-acid chain; its full sequence is Beta-defensin 124 (71 aa).

The first 22 residues, 1-22, serve as a signal peptide directing secretion; the sequence is MTQLLLFLVALLVLGHVPSGRS. Disulfide bonds link Cys-27–Cys-54, Cys-34–Cys-48, and Cys-38–Cys-55.

The protein belongs to the beta-defensin family.

Its subcellular location is the secreted. Functionally, has antibacterial activity. The sequence is that of Beta-defensin 124 (DEFB124) from Pan troglodytes (Chimpanzee).